Consider the following 216-residue polypeptide: Ras-related protein Rab-2B (216 aa).

The GTP site is built by glycine 16, valine 17, glycine 18, lysine 19, serine 20, cysteine 21, and threonine 38. A Mg(2+)-binding site is contributed by serine 20. The Switch 1 signature appears at 37–42; sequence LTIGVE. 2 residues coordinate Mg(2+): threonine 38 and aspartate 61. Residues 63 to 72 carry the Switch 2 motif; it reads AGQESFRSIT. Positions 64, 119, 120, 122, 150, and 151 each coordinate GTP. The segment covering 189-207 has biased composition (polar residues); that stretch reads PQQSITSSVGPCSPQQNVS. Positions 189–216 are disordered; sequence PQQSITSSVGPCSPQQNVSDIGPDSGCC. Residues cysteine 215 and cysteine 216 are each lipidated (S-geranylgeranyl cysteine).

It belongs to the small GTPase superfamily. Rab family. As to quaternary structure, interacts (in GTP-bound form) with GARIN4 (via N-terminus). Interacts (in GTP-bound form) with GARIN5A. Interacts (in GTP-bound form) with GARIN1B. Interacts with VPS39 and VPS41. The cofactor is Mg(2+).

It localises to the cell membrane. Its subcellular location is the endoplasmic reticulum membrane. The protein localises to the golgi apparatus membrane. It is found in the cytoplasmic vesicle. The protein resides in the secretory vesicle. It localises to the acrosome. Its subcellular location is the autophagosome membrane. It carries out the reaction GTP + H2O = GDP + phosphate + H(+). Its activity is regulated as follows. Regulated by guanine nucleotide exchange factors (GEFs) which promote the exchange of bound GDP for free GTP, GTPase activating proteins (GAPs) which increase the GTP hydrolysis activity, and GDP dissociation inhibitors (GDIs) which inhibit the dissociation of the nucleotide from the GTPase. The small GTPases Rab are key regulators of intracellular membrane trafficking, from the formation of transport vesicles to their fusion with membranes. Rabs cycle between active GTP-bound and inactive GDP-bound states. In their active state, drive transport of vesicular carriers from donor organelles to acceptor organelles to regulate the membrane traffic that maintains organelle identity and morphology. Regulates the compacted morphology of the Golgi. Promotes cytosolic DNA-induced innate immune responses. Regulates IFN responses against DNA viruses by regulating the CGAS-STING signaling axis. Together with RAB2A redundantly required for efficient autophagic flux. The chain is Ras-related protein Rab-2B (Rab2b) from Mus musculus (Mouse).